The primary structure comprises 344 residues: Follistatin (344 aa).

Positions Met1–Ala29 are cleaved as a signal peptide. Positions Gly30–Gly103 constitute a TB domain. Intrachain disulfides connect Cys32/Cys55, Cys42/Cys88, Cys56/Cys91, Cys95/Cys106, Cys100/Cys116, Cys118/Cys150, Cys122/Cys143, Cys132/Cys164, Cys168/Cys179, Cys173/Cys189, Cys192/Cys225, Cys196/Cys218, Cys207/Cys239, Cys245/Cys256, Cys250/Cys267, Cys270/Cys302, Cys274/Cys295, and Cys284/Cys316. A Follistatin-like 1 domain is found at Thr94–Val117. Positions Asn112–Lys166 constitute a Kazal-like 1 domain. Asn124 is a glycosylation site (N-linked (GlcNAc...) asparagine). Positions Thr167–Val190 constitute a Follistatin-like 2 domain. Residues Asn186–Lys241 form the Kazal-like 2 domain. The 25-residue stretch at Ser244–Ser268 folds into the Follistatin-like 3 domain. Residues Arg264 to Ser318 form the Kazal-like 3 domain. A glycan (N-linked (GlcNAc...) asparagine) is linked at Asn288. Residues Gly314–Trp344 are disordered. A compositionally biased stretch (acidic residues) spans Glu321–Asp333.

As to quaternary structure, interacts with GDF11. Interacts with activin A/INHBA. Interacts with myostatin/MSTN.

Its subcellular location is the secreted. The protein localises to the nucleus. The protein resides in the nucleolus. In terms of biological role, multifunctional regulatory protein whose primary function is to antagonize members of the transforming growth factor beta (TGF-beta) superfamily including activin, myostatin, GDF11 or bone morphogenetic proteins (BMPs). Mechanistically, binds to these ligands in the extracellular space, blocking their type II receptor-binding site to inhibit downstream signaling. Plays an essential role in muscle fiber formation and growth both by preventing the repressive effects of myostatin and through SMAD3/AKT/mTOR signaling independently of myostatin. Also promotes neural differentiation by antagonizing the action BMP4. Acts as a specific inhibitor of the biosynthesis and secretion of pituitary follicle stimulating hormone (FSH) by sequestering activin A/INHBA. On the other hand, translocates into the nucleus where it down-regulates rRNA synthesis and ribosome biogenesis to maintain cellular energy homeostasis by binding to rDNA. This Equus caballus (Horse) protein is Follistatin.